A 223-amino-acid chain; its full sequence is Ethylene-inducing xylanase (223 aa).

The signal sequence occupies residues 1–19 (MVSFTTLLAGFVAVTGVLS). In terms of domain architecture, GH11 spans 34-223 (QTIGPGTGFN…SSGNANINVS (190 aa)). N-linked (GlcNAc...) asparagine glycosylation is present at Asn-94. Residue Glu-119 is the Nucleophile of the active site. The Proton donor role is filled by Glu-210.

It belongs to the glycosyl hydrolase 11 (cellulase G) family. As to quaternary structure, interactc with tomato LeEix2 receptor to trigger its internalization.

It localises to the secreted. It carries out the reaction Endohydrolysis of (1-&gt;4)-beta-D-xylosidic linkages in xylans.. The protein operates within glycan degradation; xylan degradation. Endo-1,4-beta-xylanase involved in the hydrolysis of xylan, a major structural heterogeneous polysaccharide found in plant biomass representing the second most abundant polysaccharide in the biosphere, after cellulose. Acts as an elicitor of plant defense responses in hosts such as tobacco (Nicotiana tabacum) or tomato (Solanum lycopersicum). Induces the production of ethylene and leads alterations in membrane function with rapid efflux of potassium, uptake of calcium, alkalization of the medium, increased leakage of cellular components and necrosis in plant hosts. EIX is translocated through the xylem of the host plant to the leaf mesophyll, leading to host response to pathogen-derived extracellular proteins in tissues distant from the invading pathogen. Greatly enhances the expression of two calcineurin B-like proteins-interacting protein kinases (CIPKs) family members, OsCIPK14 and OsCIPK15, in rice cultured cells. In tomato, triggers the defense response via binding to and subsequent internalization of the LeEix2 receptor. In Hypocrea rufa (Trichoderma viride), this protein is Ethylene-inducing xylanase.